Consider the following 205-residue polypeptide: Small ribosomal subunit protein uS4 (205 aa).

The segment covering 1 to 16 has biased composition (basic and acidic residues); it reads MSKRETTKYKIDRRMG. The tract at residues 1–46 is disordered; sequence MSKRETTKYKIDRRMGENIWGRPKSPVNRRDYGPGQHGQRRKGKLS. Positions 94-157 constitute an S4 RNA-binding domain; sequence SRLDAVVYRA…KQLVLVLESV (64 aa).

Belongs to the universal ribosomal protein uS4 family. As to quaternary structure, part of the 30S ribosomal subunit. Contacts protein S5. The interaction surface between S4 and S5 is involved in control of translational fidelity.

Functionally, one of the primary rRNA binding proteins, it binds directly to 16S rRNA where it nucleates assembly of the body of the 30S subunit. In terms of biological role, with S5 and S12 plays an important role in translational accuracy. In Bartonella tribocorum (strain CIP 105476 / IBS 506), this protein is Small ribosomal subunit protein uS4.